A 429-amino-acid chain; its full sequence is Histidine--tRNA ligase (429 aa).

This sequence belongs to the class-II aminoacyl-tRNA synthetase family. Homodimer.

The protein resides in the cytoplasm. It carries out the reaction tRNA(His) + L-histidine + ATP = L-histidyl-tRNA(His) + AMP + diphosphate + H(+). The polypeptide is Histidine--tRNA ligase (Cyanothece sp. (strain PCC 7425 / ATCC 29141)).